Consider the following 230-residue polypeptide: Ion-translocating oxidoreductase complex subunit E (230 aa).

The next 5 helical transmembrane spans lie at 39 to 59, 69 to 89, 93 to 113, 125 to 145, and 182 to 202; these read LGLG…VSLI, IPVF…LMNA, GLYL…IIIG, LPAA…LVVL, and SFLL…LIAL.

This sequence belongs to the NqrDE/RnfAE family. As to quaternary structure, the complex is composed of six subunits: RnfA, RnfB, RnfC, RnfD, RnfE and RnfG.

It localises to the cell inner membrane. In terms of biological role, part of a membrane-bound complex that couples electron transfer with translocation of ions across the membrane. This is Ion-translocating oxidoreductase complex subunit E from Vibrio vulnificus (strain YJ016).